Reading from the N-terminus, the 262-residue chain is Putative hydro-lyase Mflv_5194 (262 aa).

This sequence belongs to the D-glutamate cyclase family.

This chain is Putative hydro-lyase Mflv_5194, found in Mycolicibacterium gilvum (strain PYR-GCK) (Mycobacterium gilvum (strain PYR-GCK)).